Reading from the N-terminus, the 456-residue chain is Na(+)-translocating NADH-quinone reductase subunit A (456 aa).

The protein belongs to the NqrA family. Composed of six subunits; NqrA, NqrB, NqrC, NqrD, NqrE and NqrF.

The catalysed reaction is a ubiquinone + n Na(+)(in) + NADH + H(+) = a ubiquinol + n Na(+)(out) + NAD(+). Functionally, NQR complex catalyzes the reduction of ubiquinone-1 to ubiquinol by two successive reactions, coupled with the transport of Na(+) ions from the cytoplasm to the periplasm. NqrA to NqrE are probably involved in the second step, the conversion of ubisemiquinone to ubiquinol. This is Na(+)-translocating NADH-quinone reductase subunit A from Rhodopirellula baltica (strain DSM 10527 / NCIMB 13988 / SH1).